Here is a 303-residue protein sequence, read N- to C-terminus: Signal recognition particle receptor FtsY (303 aa).

Residues 108–115, 190–194, and 254–257 each bind GTP; these read GVNGAGKT, DTAGR, and TKLD.

It belongs to the GTP-binding SRP family. FtsY subfamily. In terms of assembly, part of the signal recognition particle protein translocation system, which is composed of SRP and FtsY. SRP is a ribonucleoprotein composed of Ffh and a 4.5S RNA molecule.

Its subcellular location is the cell inner membrane. The protein localises to the cytoplasm. It carries out the reaction GTP + H2O = GDP + phosphate + H(+). In terms of biological role, involved in targeting and insertion of nascent membrane proteins into the cytoplasmic membrane. Acts as a receptor for the complex formed by the signal recognition particle (SRP) and the ribosome-nascent chain (RNC). Interaction with SRP-RNC leads to the transfer of the RNC complex to the Sec translocase for insertion into the membrane, the hydrolysis of GTP by both Ffh and FtsY, and the dissociation of the SRP-FtsY complex into the individual components. The protein is Signal recognition particle receptor FtsY of Rickettsia conorii (strain ATCC VR-613 / Malish 7).